We begin with the raw amino-acid sequence, 287 residues long: MRFIHALLLAGIAHSAYASEKLTFKTDLEKLEREKAAQIGVAIVDPQGEIVAGHRMAQRFAMCSTFKFPLAALVFERIDSGTERGDRKLSYGPDMIVEWSPATERFLASGHMTVLEAAQAAVQLSDNGATNLLLREIGGPAAMTQYFRKIGDSVSRLDRKEPEMSDNTPGDLRDTTTPIAMARTVAKVLYGGALTSTSTHTIERWLIGNQTGDATLRAGFPKDWVVGEKTGTCANGGRNDIGFFKAQERDYAVAVYTTAPKLSAVERDELVASVGQVITQLILSTDK.

A signal peptide spans 1–18; it reads MRFIHALLLAGIAHSAYA. Cys63 and Cys233 are disulfide-bonded. The active-site Nucleophile; acyl-ester intermediate is Ser64. Positions 64, 125, 127, 230, 232, and 238 each coordinate imipenem.

Belongs to the class-A beta-lactamase family.

Its subcellular location is the secreted. It carries out the reaction a beta-lactam + H2O = a substituted beta-amino acid. With respect to regulation, inhibited by the beta-lactamase-blocking agents clavulanic acid, sulbactam and tazobactam, via a covalent binding to Ser-64. Confers resistance to penicillins, cephalosporins and carbapenems. Has carbapenem-hydrolyzing activity. This chain is Beta-lactamase GES-5, found in Klebsiella pneumoniae.